Consider the following 227-residue polypeptide: Endo-1,4-beta-xylanase 11A (227 aa).

The N-terminal stretch at 1-36 is a signal peptide; sequence MVSASSLLLAASAIAGVFSAPAAAPVSENLNVLQER. The GH11 domain occupies 37–227; it reads ALTSSATGTS…SSGSASITVS (191 aa). The necrosis inducing domain stretch occupies residues 112–136; sequence VYGWTTSPLIEYYIVEDFGTYDPSS. The active-site Nucleophile is the glutamate 122. Glutamate 214 (proton donor) is an active-site residue.

This sequence belongs to the glycosyl hydrolase 11 (cellulase G) family.

It localises to the secreted. The catalysed reaction is Endohydrolysis of (1-&gt;4)-beta-D-xylosidic linkages in xylans.. It functions in the pathway glycan degradation; xylan degradation. Its activity is regulated as follows. Significantly inhibited by the wheat xylanase inhibiting protein I (XIP-I) and the proteinaceous endoxylanase Triticum aestivum xylanase inhibitors I (TAXI-I), whereas no inhibition is detected with TAXI-II. Its function is as follows. Endo-1,4-beta-xylanase involved in the hydrolysis of xylan, a major structural heterogeneous polysaccharide found in plant biomass representing the second most abundant polysaccharide in the biosphere, after cellulose. Required for plant infection and the appearance of secondary lesions. Is able to induce necrosis on leaves, seedling growth inhibition, induction of a ROS burst, electrolyte leakage, cytoplasm shrinkage, autofluorescence, cell death, and induction of defense genes, and this abilities are independent of the catalytic activity. Only exhibits elicitor activity in certain plants such as tomato, but not in N.benthamiana. The chain is Endo-1,4-beta-xylanase 11A from Botryotinia fuckeliana (strain B05.10) (Noble rot fungus).